The sequence spans 81 residues: Large ribosomal subunit protein bL31B (81 aa).

The protein belongs to the bacterial ribosomal protein bL31 family. Type B subfamily. In terms of assembly, part of the 50S ribosomal subunit.

The polypeptide is Large ribosomal subunit protein bL31B (Bacillus cereus (strain ATCC 10987 / NRS 248)).